The sequence spans 565 residues: Periplasmic trehalase (565 aa).

A signal peptide spans 1–30 (MKSPAPSRPQKMALIPACIFLCFAALSVQA). Residues arginine 152, 159-160 (WD), asparagine 196, 205-207 (RSQ), 277-279 (RPE), and glycine 310 contribute to the substrate site. Active-site proton donor/acceptor residues include aspartate 312 and glutamate 496. Glutamate 511 contributes to the substrate binding site. A disordered region spans residues 538–565 (PCDNVPATRPTVKSATTQPSTKEAQPTP). Positions 548–565 (TVKSATTQPSTKEAQPTP) are enriched in polar residues.

It belongs to the glycosyl hydrolase 37 family. In terms of assembly, monomer.

It localises to the periplasm. It catalyses the reaction alpha,alpha-trehalose + H2O = alpha-D-glucose + beta-D-glucose. Functionally, provides the cells with the ability to utilize trehalose at high osmolarity by splitting it into glucose molecules that can subsequently be taken up by the phosphotransferase-mediated uptake system. In Escherichia coli (strain 55989 / EAEC), this protein is Periplasmic trehalase.